Consider the following 618-residue polypeptide: Probable Xaa-Pro aminopeptidase P (618 aa).

Residues D414, D425, E523, and E537 each coordinate Mn(2+).

It belongs to the peptidase M24B family. The cofactor is Mn(2+).

It carries out the reaction Release of any N-terminal amino acid, including proline, that is linked to proline, even from a dipeptide or tripeptide.. In terms of biological role, catalyzes the removal of a penultimate prolyl residue from the N-termini of peptides. In Metarhizium acridum (strain CQMa 102), this protein is Probable Xaa-Pro aminopeptidase P (AMPP).